The primary structure comprises 346 residues: D-alanine--D-alanine ligase (346 aa).

In terms of domain architecture, ATP-grasp spans 133–327; it reads KLYAKSVGVK…ALADQISLEK (195 aa). An ATP-binding site is contributed by 159 to 211; that stretch reads LSFPCIIKPARLGSSIGISIVKDEKDLEYAKDVGFEFDNDLVVEEFKNNIKEY. Residues D284, E296, and N298 each contribute to the Mg(2+) site.

Belongs to the D-alanine--D-alanine ligase family. It depends on Mg(2+) as a cofactor. Requires Mn(2+) as cofactor.

The protein resides in the cytoplasm. It carries out the reaction 2 D-alanine + ATP = D-alanyl-D-alanine + ADP + phosphate + H(+). The protein operates within cell wall biogenesis; peptidoglycan biosynthesis. Its function is as follows. Cell wall formation. This Campylobacter jejuni subsp. jejuni serotype O:6 (strain 81116 / NCTC 11828) protein is D-alanine--D-alanine ligase.